We begin with the raw amino-acid sequence, 92 residues long: Small ribosomal subunit protein uS19c (92 aa).

Belongs to the universal ribosomal protein uS19 family.

It localises to the plastid. The protein resides in the chloroplast. Its function is as follows. Protein S19 forms a complex with S13 that binds strongly to the 16S ribosomal RNA. In Adiantum capillus-veneris (Maidenhair fern), this protein is Small ribosomal subunit protein uS19c.